The chain runs to 387 residues: UDP-N-acetylglucosamine--N-acetylmuramyl-(pentapeptide) pyrophosphoryl-undecaprenol N-acetylglucosamine transferase (387 aa).

UDP-N-acetyl-alpha-D-glucosamine-binding positions include Thr26 to Gly28, Asn137, Arg177, Ser205, and Gln306.

This sequence belongs to the glycosyltransferase 28 family. MurG subfamily.

The protein localises to the cell inner membrane. It catalyses the reaction di-trans,octa-cis-undecaprenyl diphospho-N-acetyl-alpha-D-muramoyl-L-alanyl-D-glutamyl-meso-2,6-diaminopimeloyl-D-alanyl-D-alanine + UDP-N-acetyl-alpha-D-glucosamine = di-trans,octa-cis-undecaprenyl diphospho-[N-acetyl-alpha-D-glucosaminyl-(1-&gt;4)]-N-acetyl-alpha-D-muramoyl-L-alanyl-D-glutamyl-meso-2,6-diaminopimeloyl-D-alanyl-D-alanine + UDP + H(+). It functions in the pathway cell wall biogenesis; peptidoglycan biosynthesis. Cell wall formation. Catalyzes the transfer of a GlcNAc subunit on undecaprenyl-pyrophosphoryl-MurNAc-pentapeptide (lipid intermediate I) to form undecaprenyl-pyrophosphoryl-MurNAc-(pentapeptide)GlcNAc (lipid intermediate II). The polypeptide is UDP-N-acetylglucosamine--N-acetylmuramyl-(pentapeptide) pyrophosphoryl-undecaprenol N-acetylglucosamine transferase (Rhodospirillum rubrum (strain ATCC 11170 / ATH 1.1.1 / DSM 467 / LMG 4362 / NCIMB 8255 / S1)).